A 193-amino-acid polypeptide reads, in one-letter code: MINKSFFEIMLVLLASSTGFSRELKLVLSQQRRVNRESLKLLNKLQTSSIQQCLPHRKNFLLPQKSMNPHQYQKQQALAILHEMLQQIFSLFRAVISLDGWEESHMEEFLVELHQQLEYLEALMRLQAEQKSDTLCSENLTLQVKMYFQRIRDYLENQDYSSCAWTIVRVEINRCLFFVFQLTGKLSKQGMEP.

The signal sequence occupies residues 1-21 (MINKSFFEIMLVLLASSTGFS). Cys53 and Cys163 are disulfide-bonded. Residue Asn139 is glycosylated (N-linked (GlcNAc...) asparagine).

Belongs to the alpha/beta interferon family.

Its subcellular location is the secreted. Its function is as follows. Type I interferon required for maintaining basal levels of IFN-regulated genes, including 2'-5'-oligoadenylate synthetase, IRF7 and ISG15, in the female reproductive tract. Directly mediates protection against viral and bacterial genital infections. The chain is Interferon epsilon (IFNE) from Sus scrofa (Pig).